The following is an 86-amino-acid chain: UPF0297 protein BBR47_19030 (86 aa).

Belongs to the UPF0297 family.

This chain is UPF0297 protein BBR47_19030, found in Brevibacillus brevis (strain 47 / JCM 6285 / NBRC 100599).